The sequence spans 420 residues: S-adenosylmethionine synthase (420 aa).

H16 lines the ATP pocket. A Mg(2+)-binding site is contributed by D18. E44 lines the K(+) pocket. L-methionine is bound by residues E57 and Q100. A flexible loop region spans residues 100 to 110; that stretch reads QSADIAQGVDK. Residues 175–177, 251–252, D260, 266–267, A283, and K287 contribute to the ATP site; these read DGK, KF, and RK. Residue D260 participates in L-methionine binding. L-methionine is bound at residue K291.

This sequence belongs to the AdoMet synthase family. As to quaternary structure, homotetramer; dimer of dimers. Mg(2+) is required as a cofactor. The cofactor is K(+).

It is found in the cytoplasm. It carries out the reaction L-methionine + ATP + H2O = S-adenosyl-L-methionine + phosphate + diphosphate. It participates in amino-acid biosynthesis; S-adenosyl-L-methionine biosynthesis; S-adenosyl-L-methionine from L-methionine: step 1/1. Functionally, catalyzes the formation of S-adenosylmethionine (AdoMet) from methionine and ATP. The overall synthetic reaction is composed of two sequential steps, AdoMet formation and the subsequent tripolyphosphate hydrolysis which occurs prior to release of AdoMet from the enzyme. In Trichodesmium erythraeum (strain IMS101), this protein is S-adenosylmethionine synthase.